A 78-amino-acid chain; its full sequence is RNA-binding protein Hfq (78 aa).

The Sm domain occupies 10-69 (DPFLNTLRKEHVPVSIYLVNGIKLQGQIESFDQYVVLLRNTVTQMVYKHAISTVVPARAV).

It belongs to the Hfq family. In terms of assembly, homohexamer.

Functionally, RNA chaperone that binds small regulatory RNA (sRNAs) and mRNAs to facilitate mRNA translational regulation in response to envelope stress, environmental stress and changes in metabolite concentrations. Also binds with high specificity to tRNAs. This is RNA-binding protein Hfq from Bordetella petrii (strain ATCC BAA-461 / DSM 12804 / CCUG 43448).